Reading from the N-terminus, the 505-residue chain is uncharacterized protein (505 aa).

Residues 193 to 440 (CTNKKCNLCE…LEIKKKYIGR (248 aa)) enclose the Radical SAM core domain. The [4Fe-4S] cluster site is built by C208, C216, and C219. Residues 435-499 (KKYIGRVLEV…EKYLEGRILK (65 aa)) enclose the TRAM domain.

The cofactor is [4Fe-4S] cluster.

This is an uncharacterized protein from Methanocaldococcus jannaschii (strain ATCC 43067 / DSM 2661 / JAL-1 / JCM 10045 / NBRC 100440) (Methanococcus jannaschii).